Reading from the N-terminus, the 265-residue chain is Deoxycytidine kinase 2 (265 aa).

ATP is bound at residue 31–39; sequence GNIAAGKST. 3 residues coordinate substrate: glutamate 56, tyrosine 89, and glutamine 100. Residue glutamate 130 is the Proton acceptor of the active site. Positions 131 and 136 each coordinate substrate. 191–195 serves as a coordination point for ATP; it reads RLQKR. Glutamate 200 serves as a coordination point for substrate. Residue 243 to 245 participates in ATP binding; that stretch reads EDF.

This sequence belongs to the DCK/DGK family. In terms of assembly, homodimer. As to expression, expressed at high levels in adult intestine, spleen, thymus and testis with lower levels in skeletal muscle and eye. In the embryo, expressed at higher levels until day 10 with lower levels in later stages.

Its subcellular location is the nucleus. It catalyses the reaction 2'-deoxycytidine + a ribonucleoside 5'-triphosphate = dCMP + a ribonucleoside 5'-diphosphate + H(+). The enzyme catalyses 2'-deoxyguanosine + ATP = dGMP + ADP + H(+). The catalysed reaction is 2'-deoxyadenosine + ATP = dAMP + ADP + H(+). Functionally, phosphorylates the deoxyribonucleosides deoxyadenosine, deoxycytidine and deoxyguanosine. Shows highest activity against deoxyguanosine followed by deoxycytidine and then deoxyadenosine. Shows only very minor activity against deoxyuridine and deoxythymidine. The chain is Deoxycytidine kinase 2 from Gallus gallus (Chicken).